The following is a 250-amino-acid chain: Ditrans,polycis-undecaprenyl-diphosphate synthase ((2E,6E)-farnesyl-diphosphate specific) (250 aa).

Residue aspartate 27 is part of the active site. Residue aspartate 27 participates in Mg(2+) binding. Residues 28–31, tryptophan 32, arginine 40, histidine 44, and 72–74 each bind substrate; these read GNGR and SSE. The active-site Proton acceptor is the asparagine 75. Positions 76, 78, and 195 each coordinate substrate. Histidine 200 lines the Mg(2+) pocket. 201-203 provides a ligand contact to substrate; the sequence is RIS. Glutamate 214 is a Mg(2+) binding site.

This sequence belongs to the UPP synthase family. In terms of assembly, homodimer. Requires Mg(2+) as cofactor.

It carries out the reaction 8 isopentenyl diphosphate + (2E,6E)-farnesyl diphosphate = di-trans,octa-cis-undecaprenyl diphosphate + 8 diphosphate. In terms of biological role, catalyzes the sequential condensation of isopentenyl diphosphate (IPP) with (2E,6E)-farnesyl diphosphate (E,E-FPP) to yield (2Z,6Z,10Z,14Z,18Z,22Z,26Z,30Z,34E,38E)-undecaprenyl diphosphate (di-trans,octa-cis-UPP). UPP is the precursor of glycosyl carrier lipid in the biosynthesis of bacterial cell wall polysaccharide components such as peptidoglycan and lipopolysaccharide. This is Ditrans,polycis-undecaprenyl-diphosphate synthase ((2E,6E)-farnesyl-diphosphate specific) from Blochmanniella floridana.